We begin with the raw amino-acid sequence, 217 residues long: Large ribosomal subunit protein uL3 (217 aa).

Residues 135 to 154 (ATHGNSLSHRAPGSIGQCQT) form a disordered region. Residue Q153 is modified to N5-methylglutamine.

The protein belongs to the universal ribosomal protein uL3 family. In terms of assembly, part of the 50S ribosomal subunit. Forms a cluster with proteins L14 and L19. Post-translationally, methylated by PrmB.

Its function is as follows. One of the primary rRNA binding proteins, it binds directly near the 3'-end of the 23S rRNA, where it nucleates assembly of the 50S subunit. This is Large ribosomal subunit protein uL3 from Coxiella burnetii (strain CbuG_Q212) (Coxiella burnetii (strain Q212)).